A 131-amino-acid chain; its full sequence is Small ribosomal subunit protein uS8 (131 aa).

Belongs to the universal ribosomal protein uS8 family. As to quaternary structure, part of the 30S ribosomal subunit. Contacts proteins S5 and S12.

Its function is as follows. One of the primary rRNA binding proteins, it binds directly to 16S rRNA central domain where it helps coordinate assembly of the platform of the 30S subunit. The sequence is that of Small ribosomal subunit protein uS8 from Sulfurimonas denitrificans (strain ATCC 33889 / DSM 1251) (Thiomicrospira denitrificans (strain ATCC 33889 / DSM 1251)).